The sequence spans 257 residues: Diphthine synthase (257 aa).

Residues I11, D89, I92, 117–118 (SV), L169, L210, and H235 contribute to the S-adenosyl-L-methionine site.

It belongs to the diphthine synthase family. As to quaternary structure, homodimer.

It carries out the reaction 2-[(3S)-amino-3-carboxypropyl]-L-histidyl-[translation elongation factor 2] + 3 S-adenosyl-L-methionine = diphthine-[translation elongation factor 2] + 3 S-adenosyl-L-homocysteine + 3 H(+). It participates in protein modification; peptidyl-diphthamide biosynthesis. In terms of biological role, S-adenosyl-L-methionine-dependent methyltransferase that catalyzes the trimethylation of the amino group of the modified target histidine residue in translation elongation factor 2 (EF-2), to form an intermediate called diphthine. The three successive methylation reactions represent the second step of diphthamide biosynthesis. This is Diphthine synthase from Saccharolobus islandicus (strain L.S.2.15 / Lassen #1) (Sulfolobus islandicus).